Reading from the N-terminus, the 567-residue chain is Proline--tRNA ligase (567 aa).

It belongs to the class-II aminoacyl-tRNA synthetase family. ProS type 1 subfamily. As to quaternary structure, homodimer.

Its subcellular location is the cytoplasm. The catalysed reaction is tRNA(Pro) + L-proline + ATP = L-prolyl-tRNA(Pro) + AMP + diphosphate. In terms of biological role, catalyzes the attachment of proline to tRNA(Pro) in a two-step reaction: proline is first activated by ATP to form Pro-AMP and then transferred to the acceptor end of tRNA(Pro). As ProRS can inadvertently accommodate and process non-cognate amino acids such as alanine and cysteine, to avoid such errors it has two additional distinct editing activities against alanine. One activity is designated as 'pretransfer' editing and involves the tRNA(Pro)-independent hydrolysis of activated Ala-AMP. The other activity is designated 'posttransfer' editing and involves deacylation of mischarged Ala-tRNA(Pro). The misacylated Cys-tRNA(Pro) is not edited by ProRS. The polypeptide is Proline--tRNA ligase (Staphylococcus aureus (strain MRSA252)).